The primary structure comprises 441 residues: Putative F-box/FBD/LRR-repeat protein At4g00315 (441 aa).

The F-box domain maps to methionine 1 to aspartate 47. 8 LRR repeats span residues glutamine 57 to leucine 82, isoleucine 87 to leucine 115, isoleucine 137 to arginine 164, valine 165 to arginine 190, leucine 211 to aspartate 236, serine 243 to leucine 271, leucine 293 to serine 318, and cysteine 319 to valine 344. The FBD domain occupies glutamine 358 to phenylalanine 410.

The chain is Putative F-box/FBD/LRR-repeat protein At4g00315 from Arabidopsis thaliana (Mouse-ear cress).